Reading from the N-terminus, the 486-residue chain is B-type cell cycle switch protein ccs52B (486 aa).

Positions 24–36 match the PEST motif motif; it reads RLETLSTPPSSAS. The span at 27-36 shows a compositional bias: polar residues; sequence TLSTPPSSAS. The disordered stretch occupies residues 27-57; sequence TLSTPPSSASPRAISNLSSTPSPSKSSKCSD. Positions 41-53 are enriched in low complexity; that stretch reads SNLSSTPSPSKSS. The C-box motif lies at 57–63; sequence DRFIPCR. Positions 87–98 match the CSM motif motif; the sequence is AYNRLLKSELFG. WD repeat units follow at residues 177–214, 218–257, 260–297, 301–340, 343–385, 387–428, and 431–470; these read QDDF…VTKL, GPYD…KVRT, GHQT…DFIG, GHKS…PTLR, EHTA…QLNS, DTGS…KVAT, and GHSM…KTPA.

The protein belongs to the WD repeat CDC20/Fizzy family. Mostly expressed in shoot apices and, to a lower extent, in roots, especially in root tips, and in hypocotyls. Expressed in nodulation-competent root zone but not in the nodules.

The protein operates within protein modification; protein ubiquitination. Its function is as follows. Component of the anaphase promoting complex/cyclosome (APC/C), a cell cycle-regulated E3 ubiquitin-protein ligase complex that controls progression through mitosis and the G1 phase of the cell cycle. This Medicago truncatula (Barrel medic) protein is B-type cell cycle switch protein ccs52B.